The primary structure comprises 399 residues: A-type ATP synthase subunit C (399 aa).

It belongs to the V-ATPase V0D/AC39 subunit family. In terms of assembly, the A-type ATPase is composed of subunits A(3), B(3), C, D, E(1 or 2), F, H(2), I and K(x).

It is found in the cell membrane. In terms of biological role, component of the A-type ATP synthase that produces ATP from ADP in the presence of a proton gradient across the membrane. The sequence is that of A-type ATP synthase subunit C from Methanocaldococcus jannaschii (strain ATCC 43067 / DSM 2661 / JAL-1 / JCM 10045 / NBRC 100440) (Methanococcus jannaschii).